The sequence spans 97 residues: MKRICSIYQSSKKSGMYLYVLKSDALERVPEGLMAAFGKAKHSFDLVLTPERKLASEDIAVVLENLEKQGYHLQMPPAEEEYIEHLPEELLRRNDPV.

Residues arginine 3–proline 87 enclose the YcgL domain.

This chain is YcgL domain-containing protein Pfl01_1389, found in Pseudomonas fluorescens (strain Pf0-1).